Consider the following 389-residue polypeptide: S-adenosylmethionine synthase (389 aa).

An ATP-binding site is contributed by histidine 15. Position 17 (aspartate 17) interacts with Mg(2+). K(+) is bound at residue glutamate 43. L-methionine is bound by residues glutamate 56 and glutamine 99. The tract at residues glutamine 99 to glutamate 109 is flexible loop. Residues aspartate 166–lysine 168, arginine 234–phenylalanine 235, aspartate 243, arginine 249–lysine 250, alanine 266, and lysine 270 each bind ATP. Position 243 (aspartate 243) interacts with L-methionine. L-methionine is bound at residue lysine 274.

The protein belongs to the AdoMet synthase family. Homotetramer; dimer of dimers. Mg(2+) is required as a cofactor. The cofactor is K(+).

It localises to the cytoplasm. It catalyses the reaction L-methionine + ATP + H2O = S-adenosyl-L-methionine + phosphate + diphosphate. It functions in the pathway amino-acid biosynthesis; S-adenosyl-L-methionine biosynthesis; S-adenosyl-L-methionine from L-methionine: step 1/1. Its function is as follows. Catalyzes the formation of S-adenosylmethionine (AdoMet) from methionine and ATP. The overall synthetic reaction is composed of two sequential steps, AdoMet formation and the subsequent tripolyphosphate hydrolysis which occurs prior to release of AdoMet from the enzyme. This Chromobacterium violaceum (strain ATCC 12472 / DSM 30191 / JCM 1249 / CCUG 213 / NBRC 12614 / NCIMB 9131 / NCTC 9757 / MK) protein is S-adenosylmethionine synthase.